We begin with the raw amino-acid sequence, 254 residues long: UDP-2,3-diacylglucosamine hydrolase (254 aa).

Mn(2+)-binding residues include aspartate 8, histidine 10, aspartate 41, asparagine 79, and histidine 114. Residue 79-80 coordinates substrate; that stretch reads NR. Substrate-binding residues include aspartate 122, serine 160, asparagine 164, lysine 167, and histidine 195. Mn(2+)-binding residues include histidine 195 and histidine 197.

Belongs to the LpxH family. It depends on Mn(2+) as a cofactor.

The protein resides in the cell inner membrane. The catalysed reaction is UDP-2-N,3-O-bis[(3R)-3-hydroxytetradecanoyl]-alpha-D-glucosamine + H2O = 2-N,3-O-bis[(3R)-3-hydroxytetradecanoyl]-alpha-D-glucosaminyl 1-phosphate + UMP + 2 H(+). It functions in the pathway glycolipid biosynthesis; lipid IV(A) biosynthesis; lipid IV(A) from (3R)-3-hydroxytetradecanoyl-[acyl-carrier-protein] and UDP-N-acetyl-alpha-D-glucosamine: step 4/6. In terms of biological role, hydrolyzes the pyrophosphate bond of UDP-2,3-diacylglucosamine to yield 2,3-diacylglucosamine 1-phosphate (lipid X) and UMP by catalyzing the attack of water at the alpha-P atom. Involved in the biosynthesis of lipid A, a phosphorylated glycolipid that anchors the lipopolysaccharide to the outer membrane of the cell. In Aeromonas salmonicida (strain A449), this protein is UDP-2,3-diacylglucosamine hydrolase.